Reading from the N-terminus, the 147-residue chain is Formiminotransferase N-terminal subdomain-containing protein (147 aa).

Residues 1–20 (MSSSRVGLRLAACLLNVSEA) form the signal peptide.

Belongs to the formiminotransferase family. In terms of tissue distribution, widely expressed with highest levels in liver and skeletal muscle, and moderate levels in kidney, bone and pancreas.

The chain is Formiminotransferase N-terminal subdomain-containing protein (FTCDNL1) from Homo sapiens (Human).